Here is a 270-residue protein sequence, read N- to C-terminus: MPGKHQQFQDPEVGCCGKYFLFGFNIVFWVLGALFLAIGLWAWGEKGVLSNISGLTDLGGLDPVWLFVVIGGIMSVLGFAGCIGALRENTFLLKFFSVFLGLIFFLELAAGILAFVFKDWIRDQLNLFINNNVKAYRDDIDLQNLIDFAQEYWSCCGARGPNDWNLNIYFNCTDLNPSRERCGVPFSCCVRDPAEDVLNTQCGYDIRLKLELEQQGSIYTKGCVGQFEKWLQDNLIVVAGVLVAIALLQICGICLAQNLVSDIEAVKANW.

The Cytoplasmic portion of the chain corresponds to 1–19 (MPGKHQQFQDPEVGCCGKY). A helical membrane pass occupies residues 20–40 (FLFGFNIVFWVLGALFLAIGL). Residues 41–63 (WAWGEKGVLSNISGLTDLGGLDP) lie on the Extracellular side of the membrane. N51 carries N-linked (GlcNAc...) asparagine glycosylation. The chain crosses the membrane as a helical span at residues 64 to 84 (VWLFVVIGGIMSVLGFAGCIG). Residues 85–94 (ALRENTFLLK) lie on the Cytoplasmic side of the membrane. A helical transmembrane segment spans residues 95–115 (FFSVFLGLIFFLELAAGILAF). Residues 116–234 (VFKDWIRDQL…GQFEKWLQDN (119 aa)) lie on the Extracellular side of the membrane. Cystine bridges form between C155–C223, C156–C188, C172–C182, and C189–C202. N-linked (GlcNAc...) asparagine glycosylation is present at N171. Residues 235–255 (LIVVAGVLVAIALLQICGICL) traverse the membrane as a helical segment. Residues 256-270 (AQNLVSDIEAVKANW) are Cytoplasmic-facing.

This sequence belongs to the tetraspanin (TM4SF) family. In terms of assembly, interacts with ADAM10; the interaction influences ADAM10 substrate specificity, endocytosis and turnover.

It is found in the cell membrane. In terms of biological role, part of TspanC8 subgroup, composed of 6 members that interact with the transmembrane metalloprotease ADAM10. This interaction is required for ADAM10 exit from the endoplasmic reticulum and for enzymatic maturation and trafficking to the cell surface as well as substrate specificity. Different TspanC8/ADAM10 complexes have distinct substrates. Seems to regulate VE-cadherin expression in endothelial cells probably through interaction with ADAM10, promoting leukocyte transmigration. The polypeptide is Tetraspanin-17 (Tspan17) (Rattus norvegicus (Rat)).